Here is a 420-residue protein sequence, read N- to C-terminus: Calreticulin (420 aa).

Residues 1 to 25 (MAIRKGSSYAVAALLALASVAAVAG) form the signal peptide. An N-linked (GlcNAc...) asparagine glycan is attached at N57. An alpha-D-glucoside-binding residues include Y115, K117, Y134, and D141. Tandem repeats lie at residues 197-208 (KHTGSIYEHWDI), 216-227 (DPEAKKPEDWDD), 233-244 (DPEDKKPEGYDD), 251-262 (DPDAKKPEDWDD), 266-276 (GEWTAPTIPNP), 280-290 (GPWKQKKIKNP), and 294-304 (GKWKAPMIDNP). The tract at residues 197–262 (KHTGSIYEHW…DAKKPEDWDD (66 aa)) is 4 X approximate repeats. The span at 213 to 258 (KIKDPEAKKPEDWDDKEYIPDPEDKKPEGYDDIPKEIPDPDAKKPE) shows a compositional bias: basic and acidic residues. Positions 213 to 285 (KIKDPEAKKP…PEYKGPWKQK (73 aa)) are disordered. Residues 266 to 304 (GEWTAPTIPNPEYKGPWKQKKIKNPNYQGKWKAPMIDNP) are 3 X approximate repeats. E324 provides a ligand contact to an alpha-D-glucoside. Residues 355-381 (GKHKEAEKAAFDEAEKKKEEEDAAKGG) show a composition bias toward basic and acidic residues. Residues 355-420 (GKHKEAEKAA…DSDDEKHDEL (66 aa)) form a disordered region. The span at 382 to 402 (DDEDDDLEDEEDDEKADEDKA) shows a compositional bias: acidic residues. Basic and acidic residues predominate over residues 403–420 (DSDAEDGKDSDDEKHDEL). The Prevents secretion from ER motif lies at 417–420 (HDEL).

Belongs to the calreticulin family.

It is found in the endoplasmic reticulum lumen. Functionally, molecular calcium-binding chaperone promoting folding, oligomeric assembly and quality control in the ER via the calreticulin/calnexin cycle. This lectin may interact transiently with almost all of the monoglucosylated glycoproteins that are synthesized in the ER. This is Calreticulin (CRT) from Zea mays (Maize).